The sequence spans 156 residues: 6,7-dimethyl-8-ribityllumazine synthase (156 aa).

5-amino-6-(D-ribitylamino)uracil is bound by residues Phe-23, 57–59, and 81–83; these read AFE and AII. Residue 86 to 87 coordinates (2S)-2-hydroxy-3-oxobutyl phosphate; it reads ST. Catalysis depends on His-89, which acts as the Proton donor. Phe-114 is a binding site for 5-amino-6-(D-ribitylamino)uracil. (2S)-2-hydroxy-3-oxobutyl phosphate is bound at residue Arg-128.

The protein belongs to the DMRL synthase family.

It carries out the reaction (2S)-2-hydroxy-3-oxobutyl phosphate + 5-amino-6-(D-ribitylamino)uracil = 6,7-dimethyl-8-(1-D-ribityl)lumazine + phosphate + 2 H2O + H(+). The protein operates within cofactor biosynthesis; riboflavin biosynthesis; riboflavin from 2-hydroxy-3-oxobutyl phosphate and 5-amino-6-(D-ribitylamino)uracil: step 1/2. In terms of biological role, catalyzes the formation of 6,7-dimethyl-8-ribityllumazine by condensation of 5-amino-6-(D-ribitylamino)uracil with 3,4-dihydroxy-2-butanone 4-phosphate. This is the penultimate step in the biosynthesis of riboflavin. The polypeptide is 6,7-dimethyl-8-ribityllumazine synthase (Wolinella succinogenes (strain ATCC 29543 / DSM 1740 / CCUG 13145 / JCM 31913 / LMG 7466 / NCTC 11488 / FDC 602W) (Vibrio succinogenes)).